We begin with the raw amino-acid sequence, 504 residues long: Ribosomal protein uS12 methylthiotransferase RimO (504 aa).

The MTTase N-terminal domain occupies 21–131 (KRVGFISLGC…VMGHVRELLP (111 aa)). [4Fe-4S] cluster is bound by residues C30, C66, C95, C186, C190, and C193. Residues 172-408 (LTPRHYAYVK…MEVAQRISTE (237 aa)) enclose the Radical SAM core domain. One can recognise a TRAM domain in the interval 411–487 (SEKVGRVMDV…EYDLFGEVIE (77 aa)).

The protein belongs to the methylthiotransferase family. RimO subfamily. The cofactor is [4Fe-4S] cluster.

It localises to the cytoplasm. It carries out the reaction L-aspartate(89)-[ribosomal protein uS12]-hydrogen + (sulfur carrier)-SH + AH2 + 2 S-adenosyl-L-methionine = 3-methylsulfanyl-L-aspartate(89)-[ribosomal protein uS12]-hydrogen + (sulfur carrier)-H + 5'-deoxyadenosine + L-methionine + A + S-adenosyl-L-homocysteine + 2 H(+). In terms of biological role, catalyzes the methylthiolation of an aspartic acid residue of ribosomal protein uS12. In Deinococcus radiodurans (strain ATCC 13939 / DSM 20539 / JCM 16871 / CCUG 27074 / LMG 4051 / NBRC 15346 / NCIMB 9279 / VKM B-1422 / R1), this protein is Ribosomal protein uS12 methylthiotransferase RimO.